Here is an 879-residue protein sequence, read N- to C-terminus: Paramyosin, long form (879 aa).

The segment at 1 to 31 is nonhelical region; sequence MSSSQAVRSSKYSYRATSTGPGTADVNIEYI. Ser18 is subject to Phosphoserine. Residues 32 to 858 are a coiled coil; it reads QDLSSLSRLE…IIRAKHRTFV (827 aa). Residues 859–879 are nonhelical region; the sequence is TTSTVPGSQVYIQETTRTITE.

This sequence belongs to the paramyosin family. In terms of assembly, heterodimer of two isoforms. Post-translationally, the more-acidic and less-abundant isoform is phosphorylated. Expressed in all larval and adult muscle tissues. Expression is five times higher in tubular than in fibrillar muscles.

The protein localises to the cytoplasm. It localises to the myofibril. Functionally, paramyosin is a major structural component of many thick filaments isolated from invertebrate muscles. The sequence is that of Paramyosin, long form (Prm) from Drosophila melanogaster (Fruit fly).